The primary structure comprises 875 residues: Probable ATP-dependent RNA helicase DDX10 (875 aa).

Residues 1–44 (MGKTVASLGQGTRPDPVRSFNRWKKKHSHRQHQKKERRKQLKKP) are disordered. At threonine 4 the chain carries Phosphothreonine. Position 7 is a phosphoserine (serine 7). Residues 21 to 41 (NRWKKKHSHRQHQKKERRKQL) show a composition bias toward basic residues. The short motif at 69-97 (TRFSDFPLSKKTLKGLQEAQYRLVTEIQK) is the Q motif element. Residues 89–91 (YRL), glutamine 96, and 113–120 (AKTGSGKT) contribute to the ATP site. The 175-residue stretch at 100 to 274 (IGLALQGKDV…RLSLKDPEYV (175 aa)) folds into the Helicase ATP-binding domain. Residues 222–225 (DEAD) carry the DEAD box motif. The 150-residue stretch at 300–449 (KISVLFSFLR…EIKINPEKLI (150 aa)) folds into the Helicase C-terminal domain. Residues 525-612 (LVKNPVTEAV…HTESVVSIEE (88 aa)) form a disordered region. A Phosphoserine modification is found at serine 540. Position 556 is an N6-acetyllysine (lysine 556). Over residues 562-575 (KSGERLEETEHRLA) the composition is skewed to basic and acidic residues. Acidic residues predominate over residues 578 to 593 (DGDEEQDEETEDEETE). At threonine 587 the chain carries Phosphothreonine. Residues 594 to 604 (DHLGKAREPHT) are compositionally biased toward basic and acidic residues. A Glycyl lysine isopeptide (Lys-Gly) (interchain with G-Cter in SUMO2) cross-link involves residue lysine 652. Over residues 734–744 (EEDKFDKEEYR) the composition is skewed to basic and acidic residues. The tract at residues 734–860 (EEDKFDKEEY…VEPLDTGLSL (127 aa)) is disordered. The span at 745–754 (KKIKAKHRER) shows a compositional bias: basic residues. The span at 755 to 774 (RLKEREARREANKRQAKARD) shows a compositional bias: basic and acidic residues. Positions 775–789 (EEEAFLDWSDEDDGG) are enriched in acidic residues. A Phosphoserine modification is found at serine 783. The span at 797-831 (DPDKHRSSEESESEDTNHKMSDTKKKQETRKRNNT) shows a compositional bias: basic and acidic residues.

Belongs to the DEAD box helicase family. DDX10/DBP4 subfamily. As to quaternary structure, interacts with AIM2; this interaction promotes AIM2 stability. Interacts with SCNA; this interaction causes DDX10 mislocalization to the nucleoplasm and cytoplasmic inclusions.

Its subcellular location is the cytoplasm. It localises to the nucleus. The protein localises to the nucleolus. It catalyses the reaction ATP + H2O = ADP + phosphate + H(+). Putative ATP-dependent RNA helicase that plays various role in innate immunity or inflammation. Plays a role in the enhancement of AIM2-induced inflammasome activation by interacting with AIM2 and stabilizing its protein level. Negatively regulates viral infection by promoting interferon beta production and interferon stimulated genes/ISGs expression. In Mus musculus (Mouse), this protein is Probable ATP-dependent RNA helicase DDX10 (Ddx10).